The chain runs to 788 residues: MSQPGPKPAASPRPSRGAAARHTQEHVNEKNIGSSSKPGEKKGSDEKKAASLGSSQPSRPHVGEAATATKVTASSAATSKSPSMSTTETKAIPVNKQLEGPDQKRPREQAVKTESKKPQSSEQPVVHEKKSKGGPKEGSEPKNLPKHTSSTGSKHAHKEKALSRSNEQMVSEKPSESKTKFQDVPSAGGESVAGGGTVATALDKVVGKKKEQKPFTPASPVQSTPSKPSDKSGMDAALDDLIDTLGGHEDTNRDDPPYTGPVVLDPMYSTYLEALGIKEGTIPPEYRKLLEKNEGITQPLPDSPKPMGTDQAIDALSSDFTCSSPTGKQSEKEKSTGEIFKAQSAGVTRSSVPPKEKKRKVEEEVINDQALQALSDSLGTRQPDPPSHVSQAEQVKEAKAKEERQEKCGEDEDTVPAEYRLKPAKDKDGKPLLPEPEETSKSLSESELIGELSADFDRSTYQDKPSTPAEKKSNDTSQTPPGETVPRASMCSIRSAPPKLASLKGVVPEDAVETLAGSLGTREADPEHEKTVEDKVKEKAKEEEHEKLGEKEETVPPDYRLEEVKDKDGKPLLPKESQEQLAPLSDDFLLDALSQDFSSPANISSLEFEDAKLSAAISEVVSQTPAPSTHAAAPLPGTEQKDKELDDALDELSDSLGQRPPDPDENKPLDDKVKEKIKPEHSEKLGERDDTIPPEYRHLLDNDGKDKPEKPPTKKTEKPDQDRDPIDALSEDLDSCPSTTETSKNTAKGKSKKTSSSKASKDGEKTKDSSKKTEEVSKPKAKEDARHS.

Residues 1-11 (MSQPGPKPAAS) show a composition bias toward pro residues. Disordered regions lie at residues 1 to 262 (MSQP…TGPV), 289 to 493 (LLEK…MCSI), and 514 to 580 (TLAG…SQEQ). S11 carries the phosphoserine modification. Positions 12–21 (PRPSRGAAAR) are enriched in low complexity. The span at 38–49 (PGEKKGSDEKKA) shows a compositional bias: basic and acidic residues. Residues 65–87 (AATATKVTASSAATSKSPSMSTT) show a composition bias toward low complexity. The span at 99-119 (EGPDQKRPREQAVKTESKKPQ) shows a compositional bias: basic and acidic residues. A Glycyl lysine isopeptide (Lys-Gly) (interchain with G-Cter in SUMO2) cross-link involves residue K112. K129 carries the post-translational modification N6-acetyllysine. A Phosphoserine modification is found at S165. T216 carries the phosphothreonine modification. Phosphoserine is present on S219. A compositionally biased stretch (basic and acidic residues) spans 246-256 (GGHEDTNRDDP). Residues 251 to 303 (TNRDDPPYTGPVVLDPMYSTYLEALGIKEGTIPPEYRKLLEKNEGITQPLPDS) form an Inhibitory domain 1 repeat. A phosphoserine mark is found at S303 and S324. Composition is skewed to polar residues over residues 318–328 (SDFTCSSPTGK) and 369–380 (QALQALSDSLGT). Residues 384-436 (DPPSHVSQAEQVKEAKAKEERQEKCGEDEDTVPAEYRLKPAKDKDGKPLLPEP) form an Inhibitory domain 2 repeat. Composition is skewed to basic and acidic residues over residues 394 to 408 (QVKE…QEKC) and 419 to 430 (YRLKPAKDKDGK). The span at 441-453 (KSLSESELIGELS) shows a compositional bias: low complexity. Residues S444, S446, and S453 each carry the phosphoserine modification. A Phosphothreonine modification is found at T479. Phosphoserine is present on S518. The span at 522–570 (READPEHEKTVEDKVKEKAKEEEHEKLGEKEETVPPDYRLEEVKDKDGK) shows a compositional bias: basic and acidic residues. The Inhibitory domain 3 repeat unit spans residues 524 to 577 (ADPEHEKTVEDKVKEKAKEEEHEKLGEKEETVPPDYRLEEVKDKDGKPLLPKES). Phosphoserine is present on residues S594, S605, S653, and S655. A disordered region spans residues 620 to 788 (VVSQTPAPST…PKAKEDARHS (169 aa)). The Inhibitory domain 4 repeat unit spans residues 661–714 (PDPDENKPLDDKVKEKIKPEHSEKLGERDDTIPPEYRHLLDNDGKDKPEKPPTK). Composition is skewed to basic and acidic residues over residues 661–726 (PDPD…RDPI) and 759–788 (ASKD…ARHS).

Belongs to the protease inhibitor I27 (calpastatin) family. Isoform 2 is the major form in all tissues examined. Isoform 1 accounts for 5-10% in tissues such as skeletal muscle, liver and brain, and 30% in myoblasts. Isoforms 4 and 5 are testis-specific. Isoform 6 is highly expressed in heart and skeletal muscle with lower levels in liver, brain and testis. Isoform 7 is expressed at high levels in liver.

Specific inhibition of calpain (calcium-dependent cysteine protease). Plays a key role in postmortem tenderization of meat and have been proposed to be involved in muscle protein degradation in living tissue. The protein is Calpastatin (Cast) of Mus musculus (Mouse).